The chain runs to 541 residues: 2-hydroxyacylsphingosine 1-beta-galactosyltransferase (541 aa).

The first 20 residues, 1 to 20 (MKSYTPYFILLWSAVGIAKA), serve as a signal peptide directing secretion. N-linked (GlcNAc...) asparagine glycans are attached at residues N78, N333, and N442. The helical transmembrane segment at 472-492 (YFLLDIAFVLLLGAALLYFLL) threads the bilayer.

This sequence belongs to the UDP-glycosyltransferase family.

Its subcellular location is the membrane. It is found in the endoplasmic reticulum. It catalyses the reaction an N-acylsphing-4-enine + UDP-alpha-D-galactose = a beta-D-galactosyl-(1&lt;-&gt;1')-N-acylsphing-4-enine + UDP + H(+). The enzyme catalyses an N-acyl-sphingoid base + UDP-alpha-D-galactose = a D-galactosylceramide + UDP + H(+). The catalysed reaction is N-(2-hydroxy-hexanoyl)-sphing-4-enine + UDP-alpha-D-galactose = N-(2-hydroxy-hexanoyl)-beta-D-galactosyl-sphing-4-enine + UDP + H(+). It carries out the reaction N-(2-hydroxy-hexanoyl)-sphinganine + UDP-alpha-D-galactose = N-(2-hydroxyhexanoyl)-beta-D-galactosylsphinganine + UDP + H(+). It functions in the pathway sphingolipid metabolism; galactosylceramide biosynthesis. Catalyzes the transfer of galactose to ceramide, a key enzymatic step in the biosynthesis of galactocerebrosides, which are abundant sphingolipids of the myelin membrane of the central nervous system and peripheral nervous system. Galactosylates both hydroxy- and non-hydroxy fatty acid-containing ceramides and diglycerides. The protein is 2-hydroxyacylsphingosine 1-beta-galactosyltransferase of Homo sapiens (Human).